A 67-amino-acid chain; its full sequence is Protein AaeX (67 aa).

The next 2 membrane-spanning stretches (helical) occupy residues Leu3 to Leu23 and Phe43 to Ser63.

This sequence belongs to the AaeX family.

It localises to the cell membrane. This Salmonella gallinarum (strain 287/91 / NCTC 13346) protein is Protein AaeX.